The primary structure comprises 336 residues: tRNA N6-adenosine threonylcarbamoyltransferase (336 aa).

Fe cation contacts are provided by histidine 111 and histidine 115. Substrate-binding positions include 133–137, aspartate 166, glycine 179, and asparagine 276; that span reads LISGG. Aspartate 301 provides a ligand contact to Fe cation.

The protein belongs to the KAE1 / TsaD family. The cofactor is Fe(2+).

The protein localises to the cytoplasm. It carries out the reaction L-threonylcarbamoyladenylate + adenosine(37) in tRNA = N(6)-L-threonylcarbamoyladenosine(37) in tRNA + AMP + H(+). Functionally, required for the formation of a threonylcarbamoyl group on adenosine at position 37 (t(6)A37) in tRNAs that read codons beginning with adenine. Is involved in the transfer of the threonylcarbamoyl moiety of threonylcarbamoyl-AMP (TC-AMP) to the N6 group of A37, together with TsaE and TsaB. TsaD likely plays a direct catalytic role in this reaction. In Wolbachia pipientis subsp. Culex pipiens (strain wPip), this protein is tRNA N6-adenosine threonylcarbamoyltransferase.